We begin with the raw amino-acid sequence, 73 residues long: uncharacterized protein (73 aa).

The protein belongs to the asfivirus I73R family.

Its subcellular location is the virion. This is an uncharacterized protein from Ornithodoros (relapsing fever ticks).